Reading from the N-terminus, the 109-residue chain is Ribonuclease P protein component (109 aa).

The protein belongs to the RnpA family. As to quaternary structure, consists of a catalytic RNA component (M1 or rnpB) and a protein subunit.

It catalyses the reaction Endonucleolytic cleavage of RNA, removing 5'-extranucleotides from tRNA precursor.. In terms of biological role, RNaseP catalyzes the removal of the 5'-leader sequence from pre-tRNA to produce the mature 5'-terminus. It can also cleave other RNA substrates such as 4.5S RNA. The protein component plays an auxiliary but essential role in vivo by binding to the 5'-leader sequence and broadening the substrate specificity of the ribozyme. The chain is Ribonuclease P protein component from Streptococcus agalactiae serotype Ia (strain ATCC 27591 / A909 / CDC SS700).